Here is a 523-residue protein sequence, read N- to C-terminus: GMP synthase [glutamine-hydrolyzing] (523 aa).

The 198-residue stretch at 8–205 (KILILDFGSQ…VVNICGCATN (198 aa)) folds into the Glutamine amidotransferase type-1 domain. C85 functions as the Nucleophile in the catalytic mechanism. Residues H179 and E181 contribute to the active site. The GMPS ATP-PPase domain maps to 206–398 (WTPENIIEDA…LGLPAEMLNR (193 aa)). 233–239 (SGGVDSS) lines the ATP pocket.

Homodimer.

The enzyme catalyses XMP + L-glutamine + ATP + H2O = GMP + L-glutamate + AMP + diphosphate + 2 H(+). It participates in purine metabolism; GMP biosynthesis; GMP from XMP (L-Gln route): step 1/1. Functionally, catalyzes the synthesis of GMP from XMP. This is GMP synthase [glutamine-hydrolyzing] from Actinobacillus succinogenes (strain ATCC 55618 / DSM 22257 / CCUG 43843 / 130Z).